The chain runs to 292 residues: Inositol monophosphatase 2 (292 aa).

Positions 75, 94, 96, 97, and 231 each coordinate Mg(2+). Glu75 is a substrate binding site. Substrate-binding positions include 96-99 (IDGT) and Asp231.

This sequence belongs to the inositol monophosphatase superfamily. It depends on Mg(2+) as a cofactor.

It carries out the reaction a myo-inositol phosphate + H2O = myo-inositol + phosphate. It participates in polyol metabolism; myo-inositol biosynthesis; myo-inositol from D-glucose 6-phosphate: step 2/2. Inhibited by Li(+) and Na(+). In terms of biological role, responsible for the provision of inositol required for synthesis of phosphatidylinositol and polyphosphoinositides and involved in the inositol cycle of calcium signaling. This chain is Inositol monophosphatase 2 (INM2), found in Saccharomyces cerevisiae (strain ATCC 204508 / S288c) (Baker's yeast).